A 344-amino-acid chain; its full sequence is L-rhamnose-proton symporter (344 aa).

10 consecutive transmembrane segments (helical) span residues 4–24 (AITM…CFYA), 38–58 (WSVG…ALLL), 74–94 (LPVF…GLTM), 101–121 (MGIG…TPII), 137–157 (TLLG…AGQL), 175–195 (LVLA…MNAA), 214–234 (LPSY…FCFI), 259–279 (VLLS…YAWG), 290–310 (ISWM…GLVL), and 323–343 (VLSL…IGMA).

Belongs to the L-rhamnose transporter (TC 2.A.7.6) family.

The protein resides in the cell inner membrane. The enzyme catalyses L-rhamnopyranose(in) + H(+)(in) = L-rhamnopyranose(out) + H(+)(out). Its function is as follows. Uptake of L-rhamnose across the cytoplasmic membrane with the concomitant transport of protons into the cell (symport system). The polypeptide is L-rhamnose-proton symporter (Escherichia coli (strain K12 / MC4100 / BW2952)).